An 829-amino-acid chain; its full sequence is Probable beta-glucosidase H (829 aa).

Asn-13 is a glycosylation site (N-linked (GlcNAc...) asparagine). Asp-225 is an active-site residue. Residues Asn-304, Asn-473, Asn-602, Asn-627, and Asn-664 are each glycosylated (N-linked (GlcNAc...) asparagine). A PA14 domain is found at 389 to 548 (RMLSNAVIHF…DPEQMVANAV (160 aa)).

The protein belongs to the glycosyl hydrolase 3 family.

Its subcellular location is the secreted. The enzyme catalyses Hydrolysis of terminal, non-reducing beta-D-glucosyl residues with release of beta-D-glucose.. It participates in glycan metabolism; cellulose degradation. Beta-glucosidases are one of a number of cellulolytic enzymes involved in the degradation of cellulosic biomass. Catalyzes the last step releasing glucose from the inhibitory cellobiose. The chain is Probable beta-glucosidase H (bglH) from Aspergillus fumigatus (strain ATCC MYA-4609 / CBS 101355 / FGSC A1100 / Af293) (Neosartorya fumigata).